A 126-amino-acid polypeptide reads, in one-letter code: Phosphoribosyl-AMP cyclohydrolase (126 aa).

Asp73 contributes to the Mg(2+) binding site. Cys74 contributes to the Zn(2+) binding site. Asp75 and Asp77 together coordinate Mg(2+). 2 residues coordinate Zn(2+): Cys91 and Cys98.

It belongs to the PRA-CH family. In terms of assembly, homodimer. Mg(2+) is required as a cofactor. Requires Zn(2+) as cofactor.

It localises to the cytoplasm. The enzyme catalyses 1-(5-phospho-beta-D-ribosyl)-5'-AMP + H2O = 1-(5-phospho-beta-D-ribosyl)-5-[(5-phospho-beta-D-ribosylamino)methylideneamino]imidazole-4-carboxamide. Its pathway is amino-acid biosynthesis; L-histidine biosynthesis; L-histidine from 5-phospho-alpha-D-ribose 1-diphosphate: step 3/9. Its function is as follows. Catalyzes the hydrolysis of the adenine ring of phosphoribosyl-AMP. The chain is Phosphoribosyl-AMP cyclohydrolase from Solibacter usitatus (strain Ellin6076).